The sequence spans 225 residues: MNKWVIGIDLSTTITGVAILRNEQIIKTFAVAFDNFNEKNLYNNVIRLIKEINLNVWLLADDDYYIGIEVANFSNPKLTQRFSIYAGMIIALMSQVLRDFNAEFKMFNANAWQLKIPQIQYNTLRKDRKLITKNLMIKTFNIKSNLNEDEYDALAIAYFYDSINSTLEQEEITKAKKIVKMNKVKQQLSISKKINKLLEKKSKLKKATAISKVDEQIEELKKLNK.

This is an uncharacterized protein from Ureaplasma parvum serovar 3 (strain ATCC 700970).